A 113-amino-acid polypeptide reads, in one-letter code: Iron-sulfur cluster insertion protein ErpA (113 aa).

Iron-sulfur cluster contacts are provided by Cys41, Cys105, and Cys107.

The protein belongs to the HesB/IscA family. Homodimer. Requires iron-sulfur cluster as cofactor.

Its function is as follows. Required for insertion of 4Fe-4S clusters for at least IspG. This is Iron-sulfur cluster insertion protein ErpA from Aliivibrio salmonicida (strain LFI1238) (Vibrio salmonicida (strain LFI1238)).